An 86-amino-acid polypeptide reads, in one-letter code: Large ribosomal subunit protein bL31 (86 aa).

Residues 64 to 86 (KYGMGSANSSESKDQKEEKDSKK) form a disordered region. Over residues 74–86 (ESKDQKEEKDSKK) the composition is skewed to basic and acidic residues.

It belongs to the bacterial ribosomal protein bL31 family. Type A subfamily. In terms of assembly, part of the 50S ribosomal subunit.

Its function is as follows. Binds the 23S rRNA. The polypeptide is Large ribosomal subunit protein bL31 (Prochlorococcus marinus (strain MIT 9301)).